A 649-amino-acid chain; its full sequence is Acetyl-coenzyme A synthetase (649 aa).

CoA-binding positions include Arg-191–Arg-194, Thr-311, and Asn-335. ATP is bound by residues Gly-387–Pro-389, Asp-411–Thr-416, Asp-500, and Arg-515. Ser-523 is a CoA binding site. Arg-526 contacts ATP. Mg(2+)-binding residues include Val-537, His-539, and Ile-542. Residue Arg-584 participates in CoA binding. Position 609 is an N6-acetyllysine (Lys-609).

This sequence belongs to the ATP-dependent AMP-binding enzyme family. Mg(2+) is required as a cofactor. Acetylated. Deacetylation by the SIR2-homolog deacetylase activates the enzyme.

It carries out the reaction acetate + ATP + CoA = acetyl-CoA + AMP + diphosphate. Catalyzes the conversion of acetate into acetyl-CoA (AcCoA), an essential intermediate at the junction of anabolic and catabolic pathways. AcsA undergoes a two-step reaction. In the first half reaction, AcsA combines acetate with ATP to form acetyl-adenylate (AcAMP) intermediate. In the second half reaction, it can then transfer the acetyl group from AcAMP to the sulfhydryl group of CoA, forming the product AcCoA. The polypeptide is Acetyl-coenzyme A synthetase (Psychromonas ingrahamii (strain DSM 17664 / CCUG 51855 / 37)).